Here is a 20-residue protein sequence, read N- to C-terminus: Apidaecin 2+ (20 aa).

The span at 1 to 13 shows a compositional bias: pro residues; that stretch reads GKPNKPRPAPIKP. The disordered stretch occupies residues 1-20; sequence GKPNKPRPAPIKPRPPHPRL.

Its subcellular location is the secreted. Its function is as follows. Antimicrobial peptide active against many Gram-negative enterobacterial and plant-associated bacterial species. Not active against other bacterial species like H.pylori, P.mirabilis, B.pertussis or N.gonorrhoeae. This Pimpla disparis (Parasitic wasp) protein is Apidaecin 2+.